The following is a 183-amino-acid chain: Isopentenyl-diphosphate Delta-isomerase (183 aa).

His26 and His33 together coordinate Mn(2+). The Nudix hydrolase domain occupies 31-165 (SLHLAFSSWL…PWAFSPWMVS (135 aa)). Cys68 is an active-site residue. Mn(2+) is bound at residue His70. Glu88 is a binding site for Mg(2+). The Mn(2+) site is built by Glu115 and Glu117. Residue Glu117 is part of the active site.

This sequence belongs to the IPP isomerase type 1 family. In terms of assembly, homodimer. It depends on Mg(2+) as a cofactor. Requires Mn(2+) as cofactor.

Its subcellular location is the cytoplasm. It carries out the reaction isopentenyl diphosphate = dimethylallyl diphosphate. Its pathway is isoprenoid biosynthesis; dimethylallyl diphosphate biosynthesis; dimethylallyl diphosphate from isopentenyl diphosphate: step 1/1. In terms of biological role, catalyzes the 1,3-allylic rearrangement of the homoallylic substrate isopentenyl (IPP) to its highly electrophilic allylic isomer, dimethylallyl diphosphate (DMAPP). The polypeptide is Isopentenyl-diphosphate Delta-isomerase (Enterobacter sp. (strain 638)).